Reading from the N-terminus, the 305-residue chain is MLLYVTLILGCWSAFSESAETDVAERANKRPIWIMGHMVNAIYQIDEFVNLGANSIETDVSFDKDANPEYTYHGVPCDCGRSCLKWEYFSDFLKGLRKATTPGDSKYHAKLVLVVFDLKTGSLYDNQAYDAGKKLAKNLLKHYWNNGNNGGRAYIVLSIPDLNHYKLITGFKETLKSEGHPELMDKVGHDFSGNDAIGDVGNAYKKAGVTGHVWQSDGITNCLLRGLSRVKEAVKNRDSSNGFINKVYYWTVDKRATTREALDAGVDGVMTNYPDVITDVLNESAYKAKFRIATYDDNPWETFKN.

A signal peptide spans Met1–Ser18. A propeptide spanning residues Ala19–Arg26 is cleaved from the precursor. The active site involves His37. The Mg(2+) site is built by Glu57 and Asp59. The Nucleophile role is filled by His73. Cystine bridges form between Cys77-Cys83 and Cys79-Cys222. Asp117 lines the Mg(2+) pocket. Residue Asn282 is glycosylated (N-linked (GlcNAc...) asparagine).

This sequence belongs to the arthropod phospholipase D family. Class II subfamily. Class IIa sub-subfamily. Mg(2+) is required as a cofactor. Expressed by the venom gland.

It is found in the secreted. The enzyme catalyses an N-(acyl)-sphingosylphosphocholine = an N-(acyl)-sphingosyl-1,3-cyclic phosphate + choline. It carries out the reaction an N-(acyl)-sphingosylphosphoethanolamine = an N-(acyl)-sphingosyl-1,3-cyclic phosphate + ethanolamine. It catalyses the reaction a 1-acyl-sn-glycero-3-phosphocholine = a 1-acyl-sn-glycero-2,3-cyclic phosphate + choline. The catalysed reaction is a 1-acyl-sn-glycero-3-phosphoethanolamine = a 1-acyl-sn-glycero-2,3-cyclic phosphate + ethanolamine. Its activity is regulated as follows. Inhibited with low affinity by edelfosine. In terms of biological role, dermonecrotic toxins cleave the phosphodiester linkage between the phosphate and headgroup of certain phospholipids (sphingolipid and lysolipid substrates), forming an alcohol (often choline) and a cyclic phosphate. This toxin acts on sphingomyelin (SM). It also acts on a broad range of lysophospholipids, like lysophosphatidylinositol (LPI), lysophosphatidylglycerol (LPG), lysophosphatidylethanolamine (LPE), lysobisphosphatidic acid (LBPA), lysophosphatidylserine (LPS) and lysophosphatidylcholines (LPC) of varying chain lengths. The substrate preference is LPI &gt; LPG &gt; LPS &gt; LPC &gt;&gt; LPE, LBPA. Furthermore, the enzyme also act on cyclic phosphatidic acid and lyso-platelet activating factor (LPAF, an alkyl-LPC). The enzyme does not act on sphingosylphosphorylcholine (SPC, also known as lyso-sphingomyelin) and PAF. The toxin may also act on ceramide phosphoethanolamine (CPE). It acts by transphosphatidylation, releasing exclusively cyclic phosphate products as second products. It does not exhibit detectable PLA1/2 activity. It induces dose-dependent hemolysis and dermonecrosis. Also induces increased vascular permeability, edema, inflammatory response, and platelet aggregation. In Loxosceles reclusa (Brown recluse spider), this protein is Dermonecrotic toxin LrSicTox-alphaIA1ii.